The chain runs to 117 residues: Large ribosomal subunit protein uL18 (117 aa).

Belongs to the universal ribosomal protein uL18 family. Part of the 50S ribosomal subunit; part of the 5S rRNA/L5/L18/L25 subcomplex. Contacts the 5S and 23S rRNAs.

This is one of the proteins that bind and probably mediate the attachment of the 5S RNA into the large ribosomal subunit, where it forms part of the central protuberance. This chain is Large ribosomal subunit protein uL18, found in Pseudoalteromonas atlantica (strain T6c / ATCC BAA-1087).